A 340-amino-acid polypeptide reads, in one-letter code: Deubiquitinase SseL (340 aa).

His-223 is a catalytic residue. Residue Cys-285 is the Nucleophile of the active site.

The protein belongs to the peptidase C79 family.

The protein resides in the secreted. Its subcellular location is the host cytoplasm. Effector proteins function to alter host cell physiology and promote bacterial survival in host tissues. This protease targets the host cell ubiquitin pathway by acting as a deubiquitinase in infected host cells. The sequence is that of Deubiquitinase SseL (sseL) from Salmonella choleraesuis (strain SC-B67).